The chain runs to 411 residues: LL-diaminopimelate aminotransferase (411 aa).

Positions 15 and 42 each coordinate substrate. Residues Tyr72, 108-109 (AK), Tyr132, Asn188, Tyr219, and 247-249 (SFS) contribute to the pyridoxal 5'-phosphate site. Substrate-binding residues include Lys109, Tyr132, and Asn188. The residue at position 250 (Lys250) is an N6-(pyridoxal phosphate)lysine. The pyridoxal 5'-phosphate site is built by Arg258 and Asn293. Substrate-binding residues include Asn293 and Arg389.

This sequence belongs to the class-I pyridoxal-phosphate-dependent aminotransferase family. LL-diaminopimelate aminotransferase subfamily. As to quaternary structure, homodimer. Pyridoxal 5'-phosphate serves as cofactor.

The catalysed reaction is (2S,6S)-2,6-diaminopimelate + 2-oxoglutarate = (S)-2,3,4,5-tetrahydrodipicolinate + L-glutamate + H2O + H(+). Its pathway is amino-acid biosynthesis; L-lysine biosynthesis via DAP pathway; LL-2,6-diaminopimelate from (S)-tetrahydrodipicolinate (aminotransferase route): step 1/1. Its function is as follows. Involved in the synthesis of meso-diaminopimelate (m-DAP or DL-DAP), required for both lysine and peptidoglycan biosynthesis. Catalyzes the direct conversion of tetrahydrodipicolinate to LL-diaminopimelate. The protein is LL-diaminopimelate aminotransferase of Desulfitobacterium hafniense (strain Y51).